A 304-amino-acid polypeptide reads, in one-letter code: Oxygen-dependent coproporphyrinogen-III oxidase (304 aa).

Serine 93 provides a ligand contact to substrate. Histidine 97 and histidine 107 together coordinate a divalent metal cation. The active-site Proton donor is histidine 107. Asparagine 109–arginine 111 contacts substrate. A divalent metal cation is bound by residues histidine 146 and histidine 176. An important for dimerization region spans residues tyrosine 241–glycine 276. Glycine 259–arginine 261 is a binding site for substrate.

It belongs to the aerobic coproporphyrinogen-III oxidase family. Homodimer. A divalent metal cation serves as cofactor.

The protein localises to the cytoplasm. It carries out the reaction coproporphyrinogen III + O2 + 2 H(+) = protoporphyrinogen IX + 2 CO2 + 2 H2O. Its pathway is porphyrin-containing compound metabolism; protoporphyrin-IX biosynthesis; protoporphyrinogen-IX from coproporphyrinogen-III (O2 route): step 1/1. In terms of biological role, involved in the heme biosynthesis. Catalyzes the aerobic oxidative decarboxylation of propionate groups of rings A and B of coproporphyrinogen-III to yield the vinyl groups in protoporphyrinogen-IX. This Pseudomonas syringae pv. syringae (strain B728a) protein is Oxygen-dependent coproporphyrinogen-III oxidase.